The sequence spans 394 residues: Elongation factor Tu (394 aa).

The 195-residue stretch at 10-204 (KPHINVGTIG…ALDKYIPEPQ (195 aa)) folds into the tr-type G domain. The segment at 19 to 26 (GHVDHGKT) is G1. Residue 19–26 (GHVDHGKT) coordinates GTP. Residue Thr-26 participates in Mg(2+) binding. A G2 region spans residues 60 to 64 (GITIN). The tract at residues 81–84 (DCPG) is G3. Residues 81–85 (DCPGH) and 136–139 (NKCD) contribute to the GTP site. Positions 136 to 139 (NKCD) are G4. Positions 174–176 (SAL) are G5.

This sequence belongs to the TRAFAC class translation factor GTPase superfamily. Classic translation factor GTPase family. EF-Tu/EF-1A subfamily. As to quaternary structure, monomer.

It is found in the cytoplasm. It catalyses the reaction GTP + H2O = GDP + phosphate + H(+). In terms of biological role, GTP hydrolase that promotes the GTP-dependent binding of aminoacyl-tRNA to the A-site of ribosomes during protein biosynthesis. The protein is Elongation factor Tu of Hamiltonella defensa subsp. Acyrthosiphon pisum (strain 5AT).